Reading from the N-terminus, the 25-residue chain is Histone H4 (25 aa).

Residues 1–14 (MSGRGKGGKGLGKG) are compositionally biased toward gly residues. The interval 1–25 (MSGRGKGGKGLGKGGAKRHRKVLRD) is disordered. The residue at position 2 (Ser-2) is an N-acetylserine. An N6-acetyllysine mark is found at Lys-6, Lys-9, Lys-13, Lys-17, and Lys-21. The span at 15 to 25 (GAKRHRKVLRD) shows a compositional bias: basic residues. The DNA-binding element occupies 17–21 (KRHRK).

Belongs to the histone H4 family. In terms of assembly, the nucleosome is a histone octamer containing two molecules each of H2A, H2B, H3 and H4 assembled in one H3-H4 heterotetramer and two H2A-H2B heterodimers. The octamer wraps approximately 147 bp of DNA.

The protein localises to the nucleus. It localises to the chromosome. Its function is as follows. Core component of nucleosome. Nucleosomes wrap and compact DNA into chromatin, limiting DNA accessibility to the cellular machineries which require DNA as a template. Histones thereby play a central role in transcription regulation, DNA repair, DNA replication and chromosomal stability. DNA accessibility is regulated via a complex set of post-translational modifications of histones, also called histone code, and nucleosome remodeling. The chain is Histone H4 from Medicago sativa (Alfalfa).